Reading from the N-terminus, the 153-residue chain is Histone H2A (153 aa).

Disordered regions lie at residues 1 to 27 (MDTG…VSRS) and 131 to 153 (KAAA…PKKA). Over residues 132–147 (AAAAATKEPKSPAKAT) the composition is skewed to low complexity. An SPKK motif motif is present at residues 149–152 (SPKK).

This sequence belongs to the histone H2A family. The nucleosome is a histone octamer containing two molecules each of H2A, H2B, H3 and H4 assembled in one H3-H4 heterotetramer and two H2A-H2B heterodimers. The octamer wraps approximately 147 bp of DNA.

Its subcellular location is the nucleus. It localises to the chromosome. In terms of biological role, core component of nucleosome. Nucleosomes wrap and compact DNA into chromatin, limiting DNA accessibility to the cellular machineries which require DNA as a template. Histones thereby play a central role in transcription regulation, DNA repair, DNA replication and chromosomal stability. DNA accessibility is regulated via a complex set of post-translational modifications of histones, also called histone code, and nucleosome remodeling. The polypeptide is Histone H2A (Euphorbia esula (Leafy spurge)).